A 185-amino-acid chain; its full sequence is Ribosome-recycling factor (185 aa).

The protein belongs to the RRF family.

It is found in the cytoplasm. Its function is as follows. Responsible for the release of ribosomes from messenger RNA at the termination of protein biosynthesis. May increase the efficiency of translation by recycling ribosomes from one round of translation to another. The polypeptide is Ribosome-recycling factor (Legionella pneumophila (strain Paris)).